A 132-amino-acid chain; its full sequence is Rubredoxin-1 (132 aa).

The region spanning 1–53 (MSRYQCPDCQYIYDENKGEPHEGFHPNTSWNDIPKDWACPDCAVRDKVDFIFL) is the Rubredoxin-like domain. Fe cation is bound by residues Cys-6, Cys-9, Cys-39, and Cys-42. The tract at residues 108 to 132 (TEVLDQASTPQVVRKSSTRKKMRNK) is disordered. The span at 113–122 (QASTPQVVRK) shows a compositional bias: polar residues. A compositionally biased stretch (basic residues) spans 123–132 (SSTRKKMRNK).

The protein belongs to the rubredoxin family. Fe(3+) serves as cofactor.

Its subcellular location is the cytoplasm. It participates in hydrocarbon metabolism; alkane degradation. Functionally, not known. Probably involved in an electron transport pathway, but not required for the hydrocarbon hydroxylating system. Seems to be non-functional. The protein is Rubredoxin-1 (alkF) of Ectopseudomonas oleovorans (Pseudomonas oleovorans).